Here is a 244-residue protein sequence, read N- to C-terminus: Derlin-2.2 (244 aa).

Residues M1 to T21 lie on the Cytoplasmic side of the membrane. Residues A22–L42 traverse the membrane as a helical segment. Residues N43–F96 lie on the Lumenal side of the membrane. A helical membrane pass occupies residues L97–I117. Residues P118 to S121 lie on the Cytoplasmic side of the membrane. Residues A122–W142 traverse the membrane as a helical segment. Residues S143–S152 lie on the Lumenal side of the membrane. The helical transmembrane segment at F153–I173 threads the bilayer. Topologically, residues L174–D244 are cytoplasmic.

This sequence belongs to the derlin family.

The protein resides in the endoplasmic reticulum membrane. In terms of biological role, may be involved in the degradation process of specific misfolded endoplasmic reticulum (ER) luminal proteins. This is Derlin-2.2 (DER2.2) from Arabidopsis thaliana (Mouse-ear cress).